A 50-amino-acid chain; its full sequence is uncharacterized protein (50 aa).

Residues 1–50 form a disordered region; sequence MKTGFWQQVLPKRAGRRKEHPVQYMPHKKEENATGLMNPSLHTSHSAILK. Residues 35–50 are compositionally biased toward polar residues; it reads GLMNPSLHTSHSAILK.

This is an uncharacterized protein from Treponema pallidum (strain Nichols).